A 280-amino-acid chain; its full sequence is uncharacterized protein (280 aa).

It belongs to the eukaryotic-type primase small subunit family.

This is an uncharacterized protein from Archaeoglobus fulgidus (strain ATCC 49558 / DSM 4304 / JCM 9628 / NBRC 100126 / VC-16).